We begin with the raw amino-acid sequence, 290 residues long: Phosphatidylglycerol--prolipoprotein diacylglyceryl transferase (290 aa).

Helical transmembrane passes span 21–41, 60–80, 96–116, 124–144, 199–219, 226–246, and 259–279; these read VSLH…MWLA, LLYA…VLFY, WDGG…MLWF, FFQV…AGRL, SQLY…NLFI, GSVS…VECF, and VISM…IMMI. Arg-143 contributes to the a 1,2-diacyl-sn-glycero-3-phospho-(1'-sn-glycerol) binding site.

This sequence belongs to the Lgt family.

The protein localises to the cell inner membrane. The enzyme catalyses L-cysteinyl-[prolipoprotein] + a 1,2-diacyl-sn-glycero-3-phospho-(1'-sn-glycerol) = an S-1,2-diacyl-sn-glyceryl-L-cysteinyl-[prolipoprotein] + sn-glycerol 1-phosphate + H(+). It participates in protein modification; lipoprotein biosynthesis (diacylglyceryl transfer). Functionally, catalyzes the transfer of the diacylglyceryl group from phosphatidylglycerol to the sulfhydryl group of the N-terminal cysteine of a prolipoprotein, the first step in the formation of mature lipoproteins. This chain is Phosphatidylglycerol--prolipoprotein diacylglyceryl transferase, found in Yersinia enterocolitica serotype O:8 / biotype 1B (strain NCTC 13174 / 8081).